Reading from the N-terminus, the 156-residue chain is Transcription elongation factor GreA (156 aa).

Positions 2 to 27 form a coiled coil; sequence EKTFPMTKEGLDKLKAELENLKLVKR.

This sequence belongs to the GreA/GreB family.

Necessary for efficient RNA polymerase transcription elongation past template-encoded arresting sites. The arresting sites in DNA have the property of trapping a certain fraction of elongating RNA polymerases that pass through, resulting in locked ternary complexes. Cleavage of the nascent transcript by cleavage factors such as GreA or GreB allows the resumption of elongation from the new 3'terminus. GreA releases sequences of 2 to 3 nucleotides. The sequence is that of Transcription elongation factor GreA from Lactococcus lactis subsp. cremoris (strain MG1363).